A 420-amino-acid polypeptide reads, in one-letter code: Histidine--tRNA ligase (420 aa).

The protein belongs to the class-II aminoacyl-tRNA synthetase family. As to quaternary structure, homodimer.

It localises to the cytoplasm. The enzyme catalyses tRNA(His) + L-histidine + ATP = L-histidyl-tRNA(His) + AMP + diphosphate + H(+). In Acholeplasma laidlawii (strain PG-8A), this protein is Histidine--tRNA ligase.